A 453-amino-acid chain; its full sequence is UDP-glycosyltransferase 74E2 (453 aa).

Catalysis depends on His17, which acts as the Proton acceptor. Position 17 (His17) interacts with an anthocyanidin. Asp109 serves as the catalytic Charge relay. UDP-alpha-D-glucose is bound by residues Thr131, Gln334, His349, Trp352, Asn353, Ser354, Glu357, Asp373, and Gln374.

This sequence belongs to the UDP-glycosyltransferase family. Expressed in roots, cotyledons and leaf hydathodes.

It catalyses the reaction (indol-3-yl)butanoate + UDP-alpha-D-glucose = 4-(indol-3-yl)butanoyl-beta-D-glucose + UDP. Functionally, glucosyltransferase that acts on the auxin indole-3-butyric acid (IBA). Mediates abiotic stress responses and stress-induced morphological adaptations by regulating auxin homeostasis. Possesses low activity in vitro on jasmonate (JA) and the synthetic auxin analog naphthaleneacetic acid (NAA). In Arabidopsis thaliana (Mouse-ear cress), this protein is UDP-glycosyltransferase 74E2 (UGT74E2).